The primary structure comprises 349 residues: Isopentenyl-diphosphate delta-isomerase (349 aa).

Position 6 to 7 (6 to 7 (RK)) interacts with substrate. FMN is bound by residues 62–64 (AMT), serine 93, and asparagine 122. Substrate is bound at residue glutamine 152. Glutamate 153 provides a ligand contact to Mg(2+). FMN-binding positions include lysine 184, threonine 214, 258–259 (GG), and 280–281 (AG).

It belongs to the IPP isomerase type 2 family. In terms of assembly, homooctamer. Dimer of tetramers. FMN is required as a cofactor. It depends on NADPH as a cofactor. The cofactor is Mg(2+).

It is found in the cytoplasm. The enzyme catalyses isopentenyl diphosphate = dimethylallyl diphosphate. Involved in the biosynthesis of isoprenoids. Catalyzes the 1,3-allylic rearrangement of the homoallylic substrate isopentenyl (IPP) to its allylic isomer, dimethylallyl diphosphate (DMAPP). The chain is Isopentenyl-diphosphate delta-isomerase from Bacillus cereus (strain AH820).